A 763-amino-acid polypeptide reads, in one-letter code: Serine/threonine-protein kinase PknG (763 aa).

A disordered region spans residues 1-32; that stretch reads MKREHMDHDTEDVGQAAQRADPPSGTTEGRLQ. The 247-residue stretch at 160–406 folds into the Protein kinase domain; it reads YEVKGCIAHG…SAEEMSAQLM (247 aa). ATP-binding positions include 166–174 and Lys190; that span reads IAHGGLGWV. Asp289 acts as the Proton acceptor in catalysis.

Belongs to the protein kinase superfamily. Ser/Thr protein kinase family. Post-translationally, autophosphorylated.

The enzyme catalyses L-seryl-[protein] + ATP = O-phospho-L-seryl-[protein] + ADP + H(+). It carries out the reaction L-threonyl-[protein] + ATP = O-phospho-L-threonyl-[protein] + ADP + H(+). This is Serine/threonine-protein kinase PknG (pknG) from Mycobacterium leprae (strain TN).